Consider the following 501-residue polypeptide: Bifunctional purine biosynthesis protein PurH (501 aa).

The MGS-like domain maps to 1–144; it reads MKKRALISVF…KNFKDVVVLS (144 aa).

This sequence belongs to the PurH family.

The catalysed reaction is (6R)-10-formyltetrahydrofolate + 5-amino-1-(5-phospho-beta-D-ribosyl)imidazole-4-carboxamide = 5-formamido-1-(5-phospho-D-ribosyl)imidazole-4-carboxamide + (6S)-5,6,7,8-tetrahydrofolate. It catalyses the reaction IMP + H2O = 5-formamido-1-(5-phospho-D-ribosyl)imidazole-4-carboxamide. The protein operates within purine metabolism; IMP biosynthesis via de novo pathway; 5-formamido-1-(5-phospho-D-ribosyl)imidazole-4-carboxamide from 5-amino-1-(5-phospho-D-ribosyl)imidazole-4-carboxamide (10-formyl THF route): step 1/1. It participates in purine metabolism; IMP biosynthesis via de novo pathway; IMP from 5-formamido-1-(5-phospho-D-ribosyl)imidazole-4-carboxamide: step 1/1. This Clostridium perfringens (strain SM101 / Type A) protein is Bifunctional purine biosynthesis protein PurH.